A 186-amino-acid chain; its full sequence is uncharacterized protein (186 aa).

The N-linked (GlcNAc...) asparagine; by host glycan is linked to Asn34. 3 consecutive transmembrane segments (helical) span residues 47–67 (IGMV…ATTF), 114–134 (ILET…IVLL), and 144–164 (LEMI…TLFF).

The protein resides in the membrane. This is an uncharacterized protein from Acanthamoeba polyphaga mimivirus (APMV).